A 301-amino-acid polypeptide reads, in one-letter code: ATP synthase gamma chain (301 aa).

Belongs to the ATPase gamma chain family. As to quaternary structure, F-type ATPases have 2 components, CF(1) - the catalytic core - and CF(0) - the membrane proton channel. CF(1) has five subunits: alpha(3), beta(3), gamma(1), delta(1), epsilon(1). CF(0) has three main subunits: a, b and c.

Its subcellular location is the cell inner membrane. Its function is as follows. Produces ATP from ADP in the presence of a proton gradient across the membrane. The gamma chain is believed to be important in regulating ATPase activity and the flow of protons through the CF(0) complex. The chain is ATP synthase gamma chain from Bordetella parapertussis (strain 12822 / ATCC BAA-587 / NCTC 13253).